The sequence spans 348 residues: Aldose 1-epimerase (348 aa).

Arg-80 provides a ligand contact to substrate. The active-site Proton donor is His-180. Asp-243 is a substrate binding site. The active-site Proton acceptor is the Glu-311.

Belongs to the aldose epimerase family.

It carries out the reaction alpha-D-glucose = beta-D-glucose. It functions in the pathway carbohydrate metabolism; hexose metabolism. Mutarotase converts alpha-aldose to the beta-anomer. It is active on D-glucose, L-arabinose, D-xylose, D-galactose, maltose and lactose. The protein is Aldose 1-epimerase (galM) of Streptococcus thermophilus.